Consider the following 36-residue polypeptide: Photosystem I reaction center subunit VIII (36 aa).

A helical transmembrane segment spans residues 6–28 (FPSVLVPLVGLVFPAMAMASLSL).

The protein belongs to the PsaI family.

The protein resides in the plastid. The protein localises to the chloroplast thylakoid membrane. In terms of biological role, may help in the organization of the PsaL subunit. The sequence is that of Photosystem I reaction center subunit VIII from Panax ginseng (Korean ginseng).